A 122-amino-acid chain; its full sequence is MARNVTKRNKRCRGHQKAIYKKKSHSSSESGLRNYSLYINRVLKEVVPQKGISSRTIDIINTMINDMFERISTEACNLMYYRKRCTLTPEDIEKAVYLLLPEKLAKYAVAFGKEAVQRYVRS.

Residues 1-25 show a composition bias toward basic residues; the sequence is MARNVTKRNKRCRGHQKAIYKKKSH. Residues 1-30 form a disordered region; sequence MARNVTKRNKRCRGHQKAIYKKKSHSSSES.

Belongs to the histone H2B family. In terms of tissue distribution, testis-specific. Restricted to the spermatid population of seminiferous epithelium. Not present in Sertoli cells, spermatogonia, spermatocytes or cells of the interstitial tissue (at protein level).

The protein resides in the cytoplasm. Functionally, may act as an acrosome-nuclear docking protein in sperm. The protein is Histone H2B subacrosomal variant (SUBH2BV) of Bos taurus (Bovine).